A 500-amino-acid chain; its full sequence is NAD(P)H-quinone oxidoreductase chain 4, chloroplastic (500 aa).

A run of 14 helical transmembrane segments spans residues Phe-4–Leu-24, Tyr-35–Phe-55, Ile-87–Val-107, Leu-113–Ser-130, Leu-134–Met-154, Phe-167–Leu-187, Ile-211–His-231, His-242–Val-262, Ala-272–Ala-292, Ile-305–Asp-325, Gly-330–Gly-350, Leu-386–Thr-406, Ile-416–Met-436, and Leu-462–Val-482.

The protein belongs to the complex I subunit 4 family.

It localises to the plastid. The protein resides in the chloroplast thylakoid membrane. The catalysed reaction is a plastoquinone + NADH + (n+1) H(+)(in) = a plastoquinol + NAD(+) + n H(+)(out). It carries out the reaction a plastoquinone + NADPH + (n+1) H(+)(in) = a plastoquinol + NADP(+) + n H(+)(out). The chain is NAD(P)H-quinone oxidoreductase chain 4, chloroplastic from Olimarabidopsis pumila (Dwarf rocket).